Here is a 73-residue protein sequence, read N- to C-terminus: Acyl carrier protein (73 aa).

Residues 1 to 73 (MAVFEKVQDI…DLVKYVENNK (73 aa)) enclose the Carrier domain. Residue serine 35 is modified to O-(pantetheine 4'-phosphoryl)serine.

Belongs to the acyl carrier protein (ACP) family. In terms of processing, 4'-phosphopantetheine is transferred from CoA to a specific serine of apo-ACP by AcpS. This modification is essential for activity because fatty acids are bound in thioester linkage to the sulfhydryl of the prosthetic group.

Its subcellular location is the cytoplasm. The protein operates within lipid metabolism; fatty acid biosynthesis. Carrier of the growing fatty acid chain in fatty acid biosynthesis. The polypeptide is Acyl carrier protein (Lactococcus lactis subsp. lactis (strain IL1403) (Streptococcus lactis)).